Reading from the N-terminus, the 147-residue chain is D-aminoacyl-tRNA deacylase (147 aa).

Residues 136-137 (GP) carry the Gly-cisPro motif, important for rejection of L-amino acids motif.

It belongs to the DTD family. As to quaternary structure, homodimer.

The protein localises to the cytoplasm. The catalysed reaction is glycyl-tRNA(Ala) + H2O = tRNA(Ala) + glycine + H(+). The enzyme catalyses a D-aminoacyl-tRNA + H2O = a tRNA + a D-alpha-amino acid + H(+). Its function is as follows. An aminoacyl-tRNA editing enzyme that deacylates mischarged D-aminoacyl-tRNAs. Also deacylates mischarged glycyl-tRNA(Ala), protecting cells against glycine mischarging by AlaRS. Acts via tRNA-based rather than protein-based catalysis; rejects L-amino acids rather than detecting D-amino acids in the active site. By recycling D-aminoacyl-tRNA to D-amino acids and free tRNA molecules, this enzyme counteracts the toxicity associated with the formation of D-aminoacyl-tRNA entities in vivo and helps enforce protein L-homochirality. In Streptococcus pyogenes serotype M1, this protein is D-aminoacyl-tRNA deacylase.